A 662-amino-acid chain; its full sequence is Glutathione hydrolase 7 (662 aa).

At 1 to 106 the chain is on the cytoplasmic side; that stretch reads MAAENEASQE…AAECSCRQDG (106 aa). Phosphoserine occurs at positions 17, 72, 79, and 83. The tract at residues 26 to 90 is disordered; it reads SFPRLPEDEP…DGSPLRETRK (65 aa). Positions 72 to 83 are enriched in low complexity; the sequence is SSSSEMGSQDGS. A helical; Signal-anchor for type II membrane protein membrane pass occupies residues 107–127; that stretch reads LTVIVTACLTFATGVTVALVM. The Extracellular portion of the chain corresponds to 128–662; that stretch reads QIYFGDPQIF…SLDATGASIL (535 aa). Residues Asn198, Asn267, Asn283, Asn330, Asn353, Asn394, Asn519, Asn523, and Asn586 are each glycosylated (N-linked (GlcNAc...) asparagine).

Belongs to the gamma-glutamyltransferase family. Heterodimer composed of the light and heavy chains. The active site is located in the light chain. Post-translationally, cleaved by autocatalysis into a large and a small subunit and the autocatalytic cleavage is essential to the functional activation of the enzyme.

It localises to the membrane. The catalysed reaction is an N-terminal (5-L-glutamyl)-[peptide] + an alpha-amino acid = 5-L-glutamyl amino acid + an N-terminal L-alpha-aminoacyl-[peptide]. The enzyme catalyses glutathione + H2O = L-cysteinylglycine + L-glutamate. It carries out the reaction an S-substituted glutathione + H2O = an S-substituted L-cysteinylglycine + L-glutamate. The protein operates within sulfur metabolism; glutathione metabolism. Functionally, hydrolyzes and transfers gamma-glutamyl moieties from glutathione and other gamma-glutamyl compounds to acceptors. This is Glutathione hydrolase 7 from Rattus norvegicus (Rat).